Here is a 392-residue protein sequence, read N- to C-terminus: NAD(P)H-quinone oxidoreductase subunit H, chloroplastic (392 aa).

It belongs to the complex I 49 kDa subunit family. As to quaternary structure, NDH is composed of at least 16 different subunits, 5 of which are encoded in the nucleus.

The protein resides in the plastid. It is found in the chloroplast thylakoid membrane. The enzyme catalyses a plastoquinone + NADH + (n+1) H(+)(in) = a plastoquinol + NAD(+) + n H(+)(out). It carries out the reaction a plastoquinone + NADPH + (n+1) H(+)(in) = a plastoquinol + NADP(+) + n H(+)(out). In terms of biological role, NDH shuttles electrons from NAD(P)H:plastoquinone, via FMN and iron-sulfur (Fe-S) centers, to quinones in the photosynthetic chain and possibly in a chloroplast respiratory chain. The immediate electron acceptor for the enzyme in this species is believed to be plastoquinone. Couples the redox reaction to proton translocation, and thus conserves the redox energy in a proton gradient. This Marchantia polymorpha (Common liverwort) protein is NAD(P)H-quinone oxidoreductase subunit H, chloroplastic.